A 402-amino-acid chain; its full sequence is Acetate kinase (402 aa).

Asn-10 lines the Mg(2+) pocket. Lys-17 is an ATP binding site. A substrate-binding site is contributed by Arg-89. Asp-148 (proton donor/acceptor) is an active-site residue. ATP contacts are provided by residues 208–212, 283–285, and 334–338; these read HLGNG, DCR, and GIGEN. Glu-389 provides a ligand contact to Mg(2+).

The protein belongs to the acetokinase family. Homodimer. Mg(2+) serves as cofactor. Mn(2+) is required as a cofactor.

Its subcellular location is the cytoplasm. The enzyme catalyses acetate + ATP = acetyl phosphate + ADP. It functions in the pathway metabolic intermediate biosynthesis; acetyl-CoA biosynthesis; acetyl-CoA from acetate: step 1/2. Its function is as follows. Catalyzes the formation of acetyl phosphate from acetate and ATP. Can also catalyze the reverse reaction. This chain is Acetate kinase, found in Actinobacillus pleuropneumoniae serotype 5b (strain L20).